Reading from the N-terminus, the 104-residue chain is N(4)-acetylcytidine amidohydrolase (104 aa).

One can recognise an ASCH domain in the interval 6-96 (ITFYQRFEAD…TIYPNEHESW (91 aa)). Lys21 serves as the catalytic Proton acceptor. The active-site Nucleophile is the Thr24. The active-site Proton donor is the Glu74.

Belongs to the N(4)-acetylcytidine amidohydrolase family.

It carries out the reaction N(4)-acetylcytidine + H2O = cytidine + acetate + H(+). It catalyses the reaction N(4)-acetyl-2'-deoxycytidine + H2O = 2'-deoxycytidine + acetate + H(+). The catalysed reaction is N(4)-acetylcytosine + H2O = cytosine + acetate + H(+). In terms of biological role, catalyzes the hydrolysis of N(4)-acetylcytidine (ac4C). The sequence is that of N(4)-acetylcytidine amidohydrolase from Haemophilus influenzae (strain 86-028NP).